Here is a 300-residue protein sequence, read N- to C-terminus: DNA repair protein RecO (300 aa).

The protein belongs to the RecO family.

Involved in DNA repair and RecF pathway recombination. This chain is DNA repair protein RecO, found in Nostoc punctiforme (strain ATCC 29133 / PCC 73102).